Reading from the N-terminus, the 152-residue chain is UPF0225 protein YchJ (152 aa).

The protein belongs to the UPF0225 family.

This chain is UPF0225 protein YchJ, found in Shigella flexneri serotype 5b (strain 8401).